The chain runs to 299 residues: GTPase Era (299 aa).

An Era-type G domain is found at 4 to 171 (KSGFVAILGR…ISLLTDNLEE (168 aa)). The G1 stretch occupies residues 12-19 (GRPNVGKS). Position 12 to 19 (12 to 19 (GRPNVGKS)) interacts with GTP. The tract at residues 38-42 (QTTRN) is G2. Positions 59-62 (DTPG) are G3. GTP is bound by residues 59–63 (DTPGI) and 121–124 (NKID). The segment at 121–124 (NKID) is G4. The G5 stretch occupies residues 150–152 (ISA). In terms of domain architecture, KH type-2 spans 202–280 (TQQEIPHSVA…YLETWVKVKK (79 aa)).

Belongs to the TRAFAC class TrmE-Era-EngA-EngB-Septin-like GTPase superfamily. Era GTPase family. As to quaternary structure, monomer.

The protein resides in the cytoplasm. The protein localises to the cell membrane. Its function is as follows. An essential GTPase that binds both GDP and GTP, with rapid nucleotide exchange. Plays a role in 16S rRNA processing and 30S ribosomal subunit biogenesis and possibly also in cell cycle regulation and energy metabolism. The chain is GTPase Era from Streptococcus uberis (strain ATCC BAA-854 / 0140J).